Consider the following 130-residue polypeptide: Small ribosomal subunit protein uS9 (130 aa).

This sequence belongs to the universal ribosomal protein uS9 family.

The chain is Small ribosomal subunit protein uS9 (rpsI) from Shigella flexneri.